The chain runs to 199 residues: Nuclear transcription factor Y subunit C-2 (199 aa).

This sequence belongs to the NFYC/HAP5 subunit family. Heterotrimeric transcription factor composed of three components, NF-YA, NF-YB and NF-YC. NF-YB and NF-YC must interact and dimerize for NF-YA association and DNA binding. Interacts with HTT1 in both cytoplasm and nucleus. Ubiquitous.

The protein localises to the nucleus. It is found in the cytoplasm. Stimulates the transcription of various genes by recognizing and binding to a CCAAT motif in promoters. In Arabidopsis thaliana (Mouse-ear cress), this protein is Nuclear transcription factor Y subunit C-2 (NFYC2).